A 119-amino-acid chain; its full sequence is Hisactophilin-3 (119 aa).

Glycine 2 carries the N-myristoyl glycine lipid modification. The segment at 8 to 110 (SHHGHFLSAE…SIYTTHHHHH (103 aa)) is contains several HHXH repeats. Repeat copies occupy residues 34 to 47 (FHVENHGHHKVAIR) and 75 to 87 (FHLEHHGGKVSIK). The tract at residues 34–87 (FHVENHGHHKVAIRTHANKYVSINDNNDVYISHHFHGEHSLFHLEHHGGKVSIK) is 2 X 13 AA approximate repeats.

Belongs to the hisactophilin family. In terms of processing, phosphorylated.

The protein resides in the cytoplasm. Its subcellular location is the cell membrane. In terms of biological role, may act as an intracellular pH sensor that links chemotactic signals to responses in the microfilament system of the cells by nucleating actin polymerization or stabilizing the filaments. In Dictyostelium discoideum (Social amoeba), this protein is Hisactophilin-3 (hatC).